The primary structure comprises 892 residues: Bifunctional uridylyltransferase/uridylyl-removing enzyme (892 aa).

The segment at 1–348 (MPNFTGNTRP…LVDAKVHVRP (348 aa)) is uridylyltransferase. Positions 349-710 (INERFQARNG…RIHNQEPGTM (362 aa)) are uridylyl-removing. Residues 467–589 (VDEHTLFLIH…VGDERRLNHL (123 aa)) form the HD domain. ACT domains are found at residues 711 to 786 (EVFI…LTQP) and 822 to 892 (VMEL…YLER).

This sequence belongs to the GlnD family. Mg(2+) is required as a cofactor.

It carries out the reaction [protein-PII]-L-tyrosine + UTP = [protein-PII]-uridylyl-L-tyrosine + diphosphate. The catalysed reaction is [protein-PII]-uridylyl-L-tyrosine + H2O = [protein-PII]-L-tyrosine + UMP + H(+). With respect to regulation, uridylyltransferase (UTase) activity is inhibited by glutamine, while glutamine activates uridylyl-removing (UR) activity. In terms of biological role, modifies, by uridylylation and deuridylylation, the PII regulatory proteins (GlnB and homologs), in response to the nitrogen status of the cell that GlnD senses through the glutamine level. Under low glutamine levels, catalyzes the conversion of the PII proteins and UTP to PII-UMP and PPi, while under higher glutamine levels, GlnD hydrolyzes PII-UMP to PII and UMP (deuridylylation). Thus, controls uridylylation state and activity of the PII proteins, and plays an important role in the regulation of nitrogen assimilation and metabolism. This chain is Bifunctional uridylyltransferase/uridylyl-removing enzyme, found in Nitrosococcus oceani (strain ATCC 19707 / BCRC 17464 / JCM 30415 / NCIMB 11848 / C-107).